The chain runs to 631 residues: 1-deoxy-D-xylulose-5-phosphate synthase (631 aa).

Thiamine diphosphate-binding positions include H76 and 117 to 119 (AHS). D148 lines the Mg(2+) pocket. Residues 149 to 150 (GA), N177, Y284, and E365 each bind thiamine diphosphate. N177 is a binding site for Mg(2+).

It belongs to the transketolase family. DXPS subfamily. In terms of assembly, homodimer. The cofactor is Mg(2+). It depends on thiamine diphosphate as a cofactor.

The catalysed reaction is D-glyceraldehyde 3-phosphate + pyruvate + H(+) = 1-deoxy-D-xylulose 5-phosphate + CO2. Its pathway is metabolic intermediate biosynthesis; 1-deoxy-D-xylulose 5-phosphate biosynthesis; 1-deoxy-D-xylulose 5-phosphate from D-glyceraldehyde 3-phosphate and pyruvate: step 1/1. Its function is as follows. Catalyzes the acyloin condensation reaction between C atoms 2 and 3 of pyruvate and glyceraldehyde 3-phosphate to yield 1-deoxy-D-xylulose-5-phosphate (DXP). This is 1-deoxy-D-xylulose-5-phosphate synthase from Methylibium petroleiphilum (strain ATCC BAA-1232 / LMG 22953 / PM1).